Reading from the N-terminus, the 59-residue chain is Large ribosomal subunit protein uL30 (59 aa).

It belongs to the universal ribosomal protein uL30 family. As to quaternary structure, part of the 50S ribosomal subunit.

The sequence is that of Large ribosomal subunit protein uL30 from Alkaliphilus metalliredigens (strain QYMF).